A 325-amino-acid polypeptide reads, in one-letter code: Lactonase drp35 (325 aa).

10 residues coordinate Ca(2+): Glu-46, Thr-108, Gly-110, Asp-128, Thr-131, Tyr-133, Asp-136, Asn-183, Asp-234, and Ser-235. The Proton donor role is filled by Asp-234.

Belongs to the SMP-30/CGR1 family. The cofactor is Ca(2+).

The protein localises to the cytoplasm. Its function is as follows. Exhibits lactonase activity. Acts in cells with perturbed membrane integrity and is possibly related to the membrane homeostasis. The protein is Lactonase drp35 (drp35) of Staphylococcus epidermidis (strain ATCC 35984 / DSM 28319 / BCRC 17069 / CCUG 31568 / BM 3577 / RP62A).